The following is a 451-amino-acid chain: Chromosomal replication initiator protein DnaA (451 aa).

A domain I, interacts with DnaA modulators region spans residues 1–72; that stretch reads MQSIEDIWQE…ANILQEITGR (72 aa). The interval 72–108 is domain II; that stretch reads RLFDVRFIDGEQEENFEYTVIKPNPALDEDGVEIGKH. Residues 109–325 are domain III, AAA+ region; that stretch reads MLNPRYVFDT…GALIRVVAYS (217 aa). ATP is bound by residues Gly-153, Gly-155, Lys-156, and Thr-157. Residues 326–451 are domain IV, binds dsDNA; the sequence is SLVNKDITAG…KNLRKAQNMF (126 aa).

Belongs to the DnaA family. In terms of assembly, oligomerizes as a right-handed, spiral filament on DNA at oriC.

Its subcellular location is the cytoplasm. Its function is as follows. Plays an essential role in the initiation and regulation of chromosomal replication. ATP-DnaA binds to the origin of replication (oriC) to initiate formation of the DNA replication initiation complex once per cell cycle. Binds the DnaA box (a 9 base pair repeat at the origin) and separates the double-stranded (ds)DNA. Forms a right-handed helical filament on oriC DNA; dsDNA binds to the exterior of the filament while single-stranded (ss)DNA is stabiized in the filament's interior. The ATP-DnaA-oriC complex binds and stabilizes one strand of the AT-rich DNA unwinding element (DUE), permitting loading of DNA polymerase. After initiation quickly degrades to an ADP-DnaA complex that is not apt for DNA replication. Binds acidic phospholipids. This is Chromosomal replication initiator protein DnaA from Listeria monocytogenes serotype 4b (strain CLIP80459).